Here is a 321-residue protein sequence, read N- to C-terminus: uncharacterized protein (321 aa).

Transmembrane regions (helical) follow at residues 10 to 28 (LWCS…EMSI), 41 to 63 (IALY…IWIY), 94 to 111 (NVAM…SMVH), 116 to 138 (LFYG…VWLL), 143 to 165 (FLFY…SNGV), 200 to 222 (NGVI…DIIF), 237 to 259 (PFII…VILA), 266 to 283 (YIIK…SIKI), and 293 to 315 (IMLS…KFFF).

Belongs to the TerC family.

Its subcellular location is the cell membrane. This is an uncharacterized protein from Buchnera aphidicola subsp. Baizongia pistaciae (strain Bp).